The following is a 62-amino-acid chain: UPF0291 protein CLI_2672 (62 aa).

The protein belongs to the UPF0291 family.

It is found in the cytoplasm. The sequence is that of UPF0291 protein CLI_2672 from Clostridium botulinum (strain Langeland / NCTC 10281 / Type F).